A 175-amino-acid polypeptide reads, in one-letter code: MNIFLKKPLHPILIGKIGKAYGILGWVKFFSFTENKEKIFSYFPWFILKKKWEIIHVDKWKKHNNNFIIHIENILDRSTVSKFTNLEIFIDKSILPILKEDEYYWNDVIDCKVFNSRKEYLGKVINLIRNQNNDVLIIRNNLKKNNFKKIMIPFIHKKIVKYINVKHKIITVIWN.

Residues 100–174 (EDEYYWNDVI…VKHKIITVIW (75 aa)) enclose the PRC barrel domain.

It belongs to the RimM family. Binds ribosomal protein uS19.

Its subcellular location is the cytoplasm. Functionally, an accessory protein needed during the final step in the assembly of 30S ribosomal subunit, possibly for assembly of the head region. Essential for efficient processing of 16S rRNA. May be needed both before and after RbfA during the maturation of 16S rRNA. It has affinity for free ribosomal 30S subunits but not for 70S ribosomes. The chain is Ribosome maturation factor RimM from Buchnera aphidicola subsp. Schizaphis graminum (strain Sg).